The sequence spans 287 residues: NAD kinase (287 aa).

Catalysis depends on Asp66, which acts as the Proton acceptor. Residues 66–67, 137–138, Arg148, Arg165, Asp167, and 178–183 contribute to the NAD(+) site; these read DG, ND, and TAYSMS.

This sequence belongs to the NAD kinase family. A divalent metal cation serves as cofactor.

Its subcellular location is the cytoplasm. The enzyme catalyses NAD(+) + ATP = ADP + NADP(+) + H(+). In terms of biological role, involved in the regulation of the intracellular balance of NAD and NADP, and is a key enzyme in the biosynthesis of NADP. Catalyzes specifically the phosphorylation on 2'-hydroxyl of the adenosine moiety of NAD to yield NADP. In Chlorobium limicola (strain DSM 245 / NBRC 103803 / 6330), this protein is NAD kinase.